We begin with the raw amino-acid sequence, 135 residues long: Retinol-binding protein 1 (135 aa).

The important for interaction with STRA6 stretch occupies residues 22-32 (RALDVNVALRK). All-trans-retinol is bound by residues K41, M63, and Q109.

The protein belongs to the calycin superfamily. Fatty-acid binding protein (FABP) family. In terms of assembly, interacts (only as retinol-free apoprotein) with STRA6.

The protein localises to the cytoplasm. It localises to the lipid droplet. In terms of biological role, cytoplasmic retinol-binding protein. Accepts retinol from the transport protein STRA6, and thereby contributes to retinol uptake, storage and retinoid homeostasis. This is Retinol-binding protein 1 (RBP1) from Bos taurus (Bovine).